The following is a 199-amino-acid chain: Charged multivesicular body protein 1B1 (199 aa).

The stretch at 10–48 forms a coiled coil; it reads NLKFAAKELNRSSKKCDKEEKAEKAKIKKAIQKGNMEVA. The interaction with IST1 stretch occupies residues 132 to 156; that stretch reads MEDTMSSTTTLTTPQNQVDMLLQEM. The interval 167–199 is disordered; it reads ELPQGQTGSVGTSVASAEQDELSQRLARLRDQV. Polar residues predominate over residues 170 to 182; that stretch reads QGQTGSVGTSVAS. Positions 174 to 199 are interaction with SPAST; that stretch reads GSVGTSVASAEQDELSQRLARLRDQV. Residues 178–199 adopt a coiled-coil conformation; that stretch reads TSVASAEQDELSQRLARLRDQV. The segment at 180 to 196 is interaction with VPS4A, MITD1 and STAMBP; that stretch reads VASAEQDELSQRLARLR. Residues 180–199 form an interaction with VTA1 region; the sequence is VASAEQDELSQRLARLRDQV. The interaction with VPS4B stretch occupies residues 183–199; sequence AEQDELSQRLARLRDQV. The short motif at 186–196 is the MIT-interacting motif element; it reads DELSQRLARLR.

This sequence belongs to the SNF7 family. As to quaternary structure, probable peripherally associated component of the endosomal sorting required for transport complex III (ESCRT-III). ESCRT-III components are thought to multimerize to form a flat lattice on the perimeter membrane of the endosome. Several assembly forms of ESCRT-III may exist that interact and act sequentially. Interacts with CHMP1A. Interacts with VTA1; the interaction probably involves the open conformation of CHMP1B. Interacts with CHMP2A. Interacts with VPS4A; the interaction is direct. Interacts with VPS4B; the interaction is direct. Interacts with SPAST (via MIT domain); the interaction is direct. Interacts with IST1. Interacts with MITD1. Interacts with STAMBP.

It is found in the cytoplasm. The protein resides in the cytosol. Its subcellular location is the endosome. It localises to the late endosome membrane. In terms of biological role, probable peripherally associated component of the endosomal sorting required for transport complex III (ESCRT-III) which is involved in multivesicular bodies (MVBs) formation and sorting of endosomal cargo proteins into MVBs. MVBs contain intraluminal vesicles (ILVs) that are generated by invagination and scission from the limiting membrane of the endosome and mostly are delivered to lysosomes enabling degradation of membrane proteins, such as stimulated growth factor receptors, lysosomal enzymes and lipids. The MVB pathway appears to require the sequential function of ESCRT-O, -I,-II and -III complexes. ESCRT-III proteins mostly dissociate from the invaginating membrane before the ILV is released. The ESCRT machinery also functions in topologically equivalent membrane fission events, such as the terminal stages of cytokinesis. ESCRT-III proteins are believed to mediate the necessary vesicle extrusion and/or membrane fission activities, possibly in conjunction with the AAA ATPase VPS4. Involved in cytokinesis. Involved in recruiting VPS4A and/or VPS4B and SPAST to the midbody of dividing cells. The polypeptide is Charged multivesicular body protein 1B1 (Mus musculus (Mouse)).